The primary structure comprises 422 residues: Cystine lyase CORI3 (422 aa).

The protein belongs to the class-I pyridoxal-phosphate-dependent aminotransferase family. In terms of assembly, homodimer. It depends on pyridoxal 5'-phosphate as a cofactor. As to expression, expressed in cotyledons, sepals, pistils, flower buds, phloem companion cells and vascular tissues of petiole, leaf, filament and fruit.

The enzyme catalyses L-cystine + H2O = S-sulfanyl-L-cysteine + pyruvate + NH4(+). In terms of biological role, possesses cystine lyase activity in vitro. Does not possess tyrosine aminotransferase, alanine aminotransferase, aspartate aminotransferase and tryptophan aminotransferase activities. The sequence is that of Cystine lyase CORI3 from Arabidopsis thaliana (Mouse-ear cress).